Reading from the N-terminus, the 115-residue chain is MKVLVICAVLFLAIFSNSSAETEDDFLEDESFEADDVIPFLAREQVRKDDKNCIPKHHECTNDKKNCCKKGLTKMKCKCFTVADAKGATSERCACDSSLLQKFGFTGLHIIKGLF.

The N-terminal stretch at 1-20 (MKVLVICAVLFLAIFSNSSA) is a signal peptide. Positions 21–47 (ETEDDFLEDESFEADDVIPFLAREQVR) are excised as a propeptide. 4 disulfides stabilise this stretch: cysteine 53-cysteine 68, cysteine 60-cysteine 77, cysteine 67-cysteine 95, and cysteine 79-cysteine 93.

The protein belongs to the neurotoxin 19 (CSTX) family. In terms of assembly, monomer. Interacts with CSTX-13 (AC P83919) (Kd=370 nM), but does not interact with CSTX-1 (AC P81694). In terms of tissue distribution, expressed by the venom gland.

It is found in the secreted. The protein localises to the target cell membrane. Synergistic toxin that induces or increases a cytolytic effect when combined with CSTX-1 (AC P81694) or CSTX-13 (AC P83919). Potassium ions and M-ctenitoxin-Cs1a (AC P83619) have also an effect on its activity. When alone, has no insecticidal activity. This is Toxin CSTX-9 from Cupiennius salei (American wandering spider).